An 81-amino-acid chain; its full sequence is ATP synthase subunit c (81 aa).

The next 2 helical transmembrane spans lie at 4 to 24 and 57 to 77; these read MIAQ…AIGA and VGLV…FVFA.

The protein belongs to the ATPase C chain family. As to quaternary structure, F-type ATPases have 2 components, F(1) - the catalytic core - and F(0) - the membrane proton channel. F(1) has five subunits: alpha(3), beta(3), gamma(1), delta(1), epsilon(1). F(0) has three main subunits: a(1), b(2) and c(10-14). The alpha and beta chains form an alternating ring which encloses part of the gamma chain. F(1) is attached to F(0) by a central stalk formed by the gamma and epsilon chains, while a peripheral stalk is formed by the delta and b chains.

The protein localises to the cell membrane. F(1)F(0) ATP synthase produces ATP from ADP in the presence of a proton or sodium gradient. F-type ATPases consist of two structural domains, F(1) containing the extramembraneous catalytic core and F(0) containing the membrane proton channel, linked together by a central stalk and a peripheral stalk. During catalysis, ATP synthesis in the catalytic domain of F(1) is coupled via a rotary mechanism of the central stalk subunits to proton translocation. Functionally, key component of the F(0) channel; it plays a direct role in translocation across the membrane. A homomeric c-ring of between 10-14 subunits forms the central stalk rotor element with the F(1) delta and epsilon subunits. This Mycobacterium leprae (strain TN) protein is ATP synthase subunit c.